A 784-amino-acid chain; its full sequence is Alpha-catulin (784 aa).

The segment at 35 to 247 (IKTKSIEQTL…LLLTASKTYL (213 aa)) is vinculin/alpha-catenin homology 1 (VH1) region. A coiled-coil region spans residues 387–414 (ASGLEVTVERLNRRLKDLSKQLQIVAME). Residues 552–696 (PRPGKHGTTQ…MVKSPTVGKT (145 aa)) are vinculin/alpha-catenin homology 2 (VH2) region. The tract at residues 737-784 (GSVNGRTGADGERTSRESTVWRRTPSIRRAAPPTSSHLSANNSSSIHI) is disordered. Residues 745-756 (ADGERTSRESTV) show a composition bias toward basic and acidic residues. Over residues 771 to 784 (SSHLSANNSSSIHI) the composition is skewed to low complexity.

This sequence belongs to the vinculin/alpha-catenin family. As to quaternary structure, interacts with slo-1 (via C-terminus); the interaction is required for localization of slo-1 to dense bodies in body wall muscle cells. Interacts (via N-terminus) with dystrophin complex member dyb-1 (via C-terminus); the interaction is required for localization of the dystrophin complex and ctn-1 near dense bodies in muscle cells. As to expression, expressed in body wall muscles, vulval muscles, stomatointestinal cells and pharyngeal muscle cells. Expressed in enteric muscles, nerve ring neurons and in the ventral nerve cord.

Its subcellular location is the cytoplasm. Required for slo-1 potassium ion channel clustering at presynaptic terminals and in egg-laying muscles; clustering of slo-1 mediates the intoxicating and sedatory effects of ethanol on worms. Required for slo-1 localization to dense bodies in body wall muscle cells. Maintains the localization of the dystrophin complex near muscle cell dense bodies via its interaction with complex member dyb-1 which is required for slo-1 localization in muscle while slo-1 localization in neurons is independent of the dystrophin complex. In Caenorhabditis elegans, this protein is Alpha-catulin.